A 286-amino-acid polypeptide reads, in one-letter code: Transcription factor MYB62 (286 aa).

HTH myb-type domains are found at residues 16–68 (DEEL…LNYL) and 69–123 (KPDI…QKQA). DNA-binding regions (H-T-H motif) lie at residues 44–68 (WNHV…LNYL) and 96–119 (WSKI…RTRV).

Expressed in leaves and flowers.

It localises to the nucleus. Functionally, transcription repressor of phosphate (Pi) starvation-induced genes. Negatively regulates Pi starvation responses via the repression of gibberellic acid (GA) biosynthesis and signaling. Modulates root architecture, phosphatase activity, and Pi uptake and accumulation. This Arabidopsis thaliana (Mouse-ear cress) protein is Transcription factor MYB62.